Reading from the N-terminus, the 179-residue chain is Cell division protein ZapC (179 aa).

This sequence belongs to the ZapC family. In terms of assembly, interacts directly with FtsZ.

It is found in the cytoplasm. Functionally, contributes to the efficiency of the cell division process by stabilizing the polymeric form of the cell division protein FtsZ. Acts by promoting interactions between FtsZ protofilaments and suppressing the GTPase activity of FtsZ. The polypeptide is Cell division protein ZapC (Tolumonas auensis (strain DSM 9187 / NBRC 110442 / TA 4)).